A 95-amino-acid chain; its full sequence is Co-chaperonin GroES (95 aa).

It belongs to the GroES chaperonin family. Heptamer of 7 subunits arranged in a ring. Interacts with the chaperonin GroEL.

Its subcellular location is the cytoplasm. In terms of biological role, together with the chaperonin GroEL, plays an essential role in assisting protein folding. The GroEL-GroES system forms a nano-cage that allows encapsulation of the non-native substrate proteins and provides a physical environment optimized to promote and accelerate protein folding. GroES binds to the apical surface of the GroEL ring, thereby capping the opening of the GroEL channel. The chain is Co-chaperonin GroES from Vesicomyosocius okutanii subsp. Calyptogena okutanii (strain HA).